A 788-amino-acid chain; its full sequence is Protein HHLF1 (788 aa).

Disordered stretches follow at residues 1–82 (MAQR…NFWH), 366–385 (TGTA…ETEA), and 609–663 (IHKK…SRLP). A compositionally biased stretch (gly residues) spans 16–25 (RGRGAGGPSG). Positions 26 to 56 (VGSSPPSSCVPMGAPSTAGTGASAAATTTPG) are enriched in low complexity. Residues 74–248 (SGNNSNFWHG…HGAGEVVRLY (175 aa)) form an RNA-binding region. Residues 650-659 (LRRDDEDWKP) are compositionally biased toward basic and acidic residues. An interaction with host EIF2AK2/PKR region spans residues 671–788 (LDETFWVLGS…IATHYHYNAQ (118 aa)).

Belongs to the herpesviridae US22 family. As to quaternary structure, interacts with host EIF2AK2/PKR; this interaction retains EIF2AK2 to the host nucleus and prevents its activation. Interaction (via N-terminus) with host BECN1; this interaction inhibits host autophagy. Interacts with the viral DNA polymerase accessory subunit UL44. Interacts with host HSPA5.

Its subcellular location is the virion. It is found in the host cytoplasm. The protein resides in the host nucleus. Its function is as follows. Inhibits the establishment of the antiviral state and the integrated stress response (ISR) in the infected cell. Prevents the phosphorylation of the host eukaryotic translation initiation factor eIF-2alpha/EIF2S1 and thus the shutoff of viral and cellular protein synthesis by directly interacting with EIF2AK2/PKR. Prevents stress granule formation in response to eIF-2alpha/EIF2S1 phosphorylation, thereby rescuing viral replication and protein synthesis. Also inhibits host autophagy by interacting with host Beclin-1/BECN1. The protein is Protein HHLF1 (TRS1) of Homo sapiens (Human).